A 194-amino-acid polypeptide reads, in one-letter code: Adenylate kinase (194 aa).

Position 10-15 (glycine 10–threonine 15) interacts with ATP. The NMP stretch occupies residues serine 30 to valine 59. AMP is bound by residues threonine 31, arginine 36, glycine 57–valine 59, glycine 85–arginine 88, and glutamine 92. The segment at asparagine 126 to aspartate 142 is LID. Arginine 127 contributes to the ATP binding site. AMP-binding residues include arginine 139 and arginine 150. Alanine 178 contributes to the ATP binding site.

Belongs to the adenylate kinase family. Monomer.

The protein resides in the cytoplasm. It catalyses the reaction AMP + ATP = 2 ADP. The protein operates within purine metabolism; AMP biosynthesis via salvage pathway; AMP from ADP: step 1/1. Its function is as follows. Catalyzes the reversible transfer of the terminal phosphate group between ATP and AMP. Plays an important role in cellular energy homeostasis and in adenine nucleotide metabolism. In Azorhizobium caulinodans (strain ATCC 43989 / DSM 5975 / JCM 20966 / LMG 6465 / NBRC 14845 / NCIMB 13405 / ORS 571), this protein is Adenylate kinase.